We begin with the raw amino-acid sequence, 685 residues long: Pentatricopeptide repeat-containing protein At5g19020, mitochondrial (685 aa).

Residues 1–23 (MIKLIRFFRSRRCWVISLQARCF) constitute a mitochondrion transit peptide. 17 PPR repeats span residues 40–74 (TERALVSALGSCASSNDVTCGRQIHCRVLKSGLDS), 75–105 (NGYICNSVLNMYAKCRLLADAESVFRDHAKL), 106–136 (DSASFNIMVDGYVRSRRLWDALKLFDVMPER), 137–171 (SCVSYTTLIKGYAQNNQWSEAMELFREMRNLGIML), 172–206 (NEVTLATVISACSHLGGIWDCRMLQSLAIKLKLEG), 207–237 (RVFVSTNLLHMYCLCLCLKDARKLFDEMPER), 238–268 (NLVTWNVMLNGYSKAGLIEQAEELFDQITEK), 269–303 (DIVSWGTMIDGCLRKNQLDEALVYYTEMLRCGMKP), 304–338 (SEVMMVDLLSASARSVGSSKGLQLHGTIVKRGFDC), 339–369 (YDFLQATIIHFYAVSNDIKLALQQFEASVKD), 370–400 (HIASRNALIAGFVKNGMVEQAREVFDQTHDK), 401–435 (DIFSWNAMISGYAQSLSPQLALHLFREMISSSQVK), 437–471 (DAITMVSVFSAISSLGSLEEGKRAHDYLNFSTIPP), 472–502 (NDNLTAAIIDMYAKCGSIETALNIFHQTKNI), 506–540 (TISPWNAIICGSATHGHAKLALDLYSDLQSLPIKP), 541–576 (NSITFVGVLSACCHAGLVELGKTYFESMKSDHGIEP), and 577–607 (DIKHYGCMVDLLGKAGRLEEAKEMIKKMPVK). Residues 612–685 (IWGMLLSASR…EWSRAFSGVV (74 aa)) form a type E motif; degenerate region.

Belongs to the PPR family. PCMP-E subfamily.

It localises to the mitochondrion. This chain is Pentatricopeptide repeat-containing protein At5g19020, mitochondrial (PCMP-E42), found in Arabidopsis thaliana (Mouse-ear cress).